The primary structure comprises 248 residues: Sulfur carrier protein FdhD (248 aa).

Residue cysteine 99 is the Cysteine persulfide intermediate of the active site. 232–237 (FVRGKR) contacts Mo-bis(molybdopterin guanine dinucleotide).

Belongs to the FdhD family.

It is found in the cytoplasm. Required for formate dehydrogenase (FDH) activity. Acts as a sulfur carrier protein that transfers sulfur from IscS to the molybdenum cofactor prior to its insertion into FDH. The protein is Sulfur carrier protein FdhD of Methanothermobacter thermautotrophicus (strain ATCC 29096 / DSM 1053 / JCM 10044 / NBRC 100330 / Delta H) (Methanobacterium thermoautotrophicum).